The following is a 459-amino-acid chain: Taurine--pyruvate aminotransferase (459 aa).

N6-(pyridoxal phosphate)lysine is present on K287.

Belongs to the class-III pyridoxal-phosphate-dependent aminotransferase family. It depends on pyridoxal 5'-phosphate as a cofactor.

It is found in the cytoplasm. The catalysed reaction is taurine + pyruvate = sulfoacetaldehyde + L-alanine. The protein operates within organosulfur degradation; taurine degradation via aerobic pathway; acetyl phosphate and sulfite from taurine: step 1/2. Catalyzes the degradation of taurine into alanine and sulfoacetaldehyde. The protein is Taurine--pyruvate aminotransferase of Rhodobacter capsulatus (strain ATCC BAA-309 / NBRC 16581 / SB1003).